Here is a 377-residue protein sequence, read N- to C-terminus: Chaperone protein DnaJ (377 aa).

Residues 5 to 70 (DYYQVLGVSR…KKRSAYDQLG (66 aa)) enclose the J domain. A CR-type zinc finger spans residues 138–216 (GVTKIISFKT…CYGEGRYINT (79 aa)). Residues Cys-151, Cys-154, Cys-168, Cys-171, Cys-190, Cys-193, Cys-204, and Cys-207 each contribute to the Zn(2+) site. 4 CXXCXGXG motif repeats span residues 151-158 (CDACAGKG), 168-175 (CPTCRGSG), 190-197 (CQTCRGAG), and 204-211 (CTKCYGEG).

Belongs to the DnaJ family. In terms of assembly, homodimer. Zn(2+) serves as cofactor.

The protein localises to the cytoplasm. Its function is as follows. Participates actively in the response to hyperosmotic and heat shock by preventing the aggregation of stress-denatured proteins and by disaggregating proteins, also in an autonomous, DnaK-independent fashion. Unfolded proteins bind initially to DnaJ; upon interaction with the DnaJ-bound protein, DnaK hydrolyzes its bound ATP, resulting in the formation of a stable complex. GrpE releases ADP from DnaK; ATP binding to DnaK triggers the release of the substrate protein, thus completing the reaction cycle. Several rounds of ATP-dependent interactions between DnaJ, DnaK and GrpE are required for fully efficient folding. Also involved, together with DnaK and GrpE, in the DNA replication of plasmids through activation of initiation proteins. This chain is Chaperone protein DnaJ, found in Orientia tsutsugamushi (strain Boryong) (Rickettsia tsutsugamushi).